The chain runs to 1561 residues: Rho GTPase-activating protein 190 (1561 aa).

FF domains lie at 252 to 320, 365 to 419, 426 to 480, and 482 to 547; these read YQES…HMKK, YLQN…YLNS, KIGW…HQDD, and IEKS…HLRF. Residues 592 to 765 enclose the pG1 pseudoGTPase domain; that stretch reads SGSDRTLNLL…EPYPSNHTDL (174 aa). The region spanning 766 to 926 is the pG2 pseudoGTPase domain; the sequence is RILCCIFCGD…LKTAWDNKYE (161 aa). 5 positions are modified to phosphoserine: S973, S975, S985, S988, and S996. The tract at residues 1054-1074 is disordered; that stretch reads KIRPKGPSQTLKVGEAPSRNC. In terms of domain architecture, Rho-GAP spans 1349-1552; it reads AQFGKLMITS…TMIDQFPYLF (204 aa).

With respect to regulation, negatively regulated by integrin, bsk and Src/Src64B. In terms of biological role, GTPase-activating protein (GAP) for RhoA/Rho1 that plays an essential role in the stability of dorsal branches of mushroom body (MB) neurons. The MB neurons are the center for olfactory learning and memory. Acts by converting RhoA/Rho1 to an inactive GDP-bound state, leading to repress the RhoA/Rho1-Drok-MRLC signaling pathway thereby maintaining axon branch stability. This is Rho GTPase-activating protein 190 (RhoGAPp190) from Drosophila melanogaster (Fruit fly).